The following is a 50-amino-acid chain: Kappa-actitoxin-Bcs4a (50 aa).

It belongs to the sea anemone type 5 potassium channel toxin family. Post-translationally, contains 4 disulfide bonds.

The protein resides in the secreted. Its subcellular location is the nematocyst. In terms of biological role, inhibits voltage-gated potassium channels (Kv1/KCNA). Is potent on Drosophila Shaker IR channels (IC(50)=94.25 nM), and rKv1.2/KCNA2 (IC(50)=172.59 nM), and moderately active on hKv1.3/KCNA3 (IC(50)=1006.48 nM), rKv1.6/KCNA6 (IC(50)=2245.93 nM), and Kv1.1/KCNA1 (IC(50) around 3 uM). In vivo, induces a rapid increase in swimming speed on zebrafish larvae, as well as death which occurs between 2 and 18 hours later. Also paralyzes swimming crabs (C.danae) when injected at the junction between the body and the walking leg. This Bunodosoma caissarum (Sea anemone) protein is Kappa-actitoxin-Bcs4a.